The chain runs to 48 residues: uncharacterized protein (48 aa).

The segment at 1–48 (MTKIPINIPATSGKIKFGITPSSNKSPSLSPSPSNGQLGGGRGYILEP) is disordered. Over residues 21-36 (PSSNKSPSLSPSPSNG) the composition is skewed to low complexity. Residues 37-48 (QLGGGRGYILEP) are compositionally biased toward gly residues.

This is an uncharacterized protein from Dictyostelium discoideum (Social amoeba).